Reading from the N-terminus, the 488-residue chain is UDP-N-acetylmuramate--L-alanine ligase (488 aa).

Position 122-128 (122-128 (GTHGKTT)) interacts with ATP.

Belongs to the MurCDEF family.

The protein localises to the cytoplasm. It catalyses the reaction UDP-N-acetyl-alpha-D-muramate + L-alanine + ATP = UDP-N-acetyl-alpha-D-muramoyl-L-alanine + ADP + phosphate + H(+). It functions in the pathway cell wall biogenesis; peptidoglycan biosynthesis. Its function is as follows. Cell wall formation. The chain is UDP-N-acetylmuramate--L-alanine ligase from Mycobacterium marinum (strain ATCC BAA-535 / M).